The following is a 420-amino-acid chain: Pyrophosphate--fructose 6-phosphate 1-phosphotransferase (420 aa).

Glycine 13 lines the diphosphate pocket. Substrate-binding positions include 142–144 (TVD), 190–192 (MGR), glutamate 247, and 297–300 (YLQR). The Proton acceptor role is filled by aspartate 144.

It belongs to the phosphofructokinase type A (PFKA) family. PPi-dependent PFK group II subfamily. Clade 'B2' sub-subfamily. As to quaternary structure, homodimer. Mg(2+) is required as a cofactor. Co(2+) serves as cofactor. It depends on Mn(2+) as a cofactor.

It localises to the cytoplasm. It carries out the reaction beta-D-fructose 6-phosphate + diphosphate = beta-D-fructose 1,6-bisphosphate + phosphate + H(+). The protein operates within carbohydrate degradation; glycolysis; D-glyceraldehyde 3-phosphate and glycerone phosphate from D-glucose: step 3/4. With respect to regulation, non-allosteric. Its function is as follows. Catalyzes the phosphorylation of D-fructose 6-phosphate, the first committing step of glycolysis. Uses inorganic phosphate (PPi) as phosphoryl donor instead of ATP like common ATP-dependent phosphofructokinases (ATP-PFKs), which renders the reaction reversible, and can thus function both in glycolysis and gluconeogenesis. Consistently, PPi-PFK can replace the enzymes of both the forward (ATP-PFK) and reverse (fructose-bisphosphatase (FBPase)) reactions. The chain is Pyrophosphate--fructose 6-phosphate 1-phosphotransferase from Methylococcus capsulatus (strain ATCC 33009 / NCIMB 11132 / Bath).